Here is a 231-residue protein sequence, read N- to C-terminus: tRNA (guanine-N(7)-)-methyltransferase (231 aa).

The S-adenosyl-L-methionine site is built by glutamate 62, glutamate 87, aspartate 114, and aspartate 137. Aspartate 137 is a catalytic residue. Residues lysine 141, aspartate 173, and threonine 210–glutamate 213 each bind substrate.

The protein belongs to the class I-like SAM-binding methyltransferase superfamily. TrmB family.

It carries out the reaction guanosine(46) in tRNA + S-adenosyl-L-methionine = N(7)-methylguanosine(46) in tRNA + S-adenosyl-L-homocysteine. It functions in the pathway tRNA modification; N(7)-methylguanine-tRNA biosynthesis. Functionally, catalyzes the formation of N(7)-methylguanine at position 46 (m7G46) in tRNA. The sequence is that of tRNA (guanine-N(7)-)-methyltransferase from Methylococcus capsulatus (strain ATCC 33009 / NCIMB 11132 / Bath).